A 239-amino-acid chain; its full sequence is Probable transcriptional regulator ycf27 (239 aa).

Residues 7 to 120 (KILVVDDEIS…ELEARIRSLL (114 aa)) enclose the Response regulatory domain. 4-aspartylphosphate is present on D56. Residues 76-94 (DIPIIMLTALGDVADRITG) constitute a DNA-binding region (H-T-H motif). The ompR/PhoB-type DNA-binding region spans 135-236 (GENLQIGFLK…ARGIGYLFQN (102 aa)).

Its subcellular location is the plastid. It localises to the cyanelle. Its function is as follows. Probable promoter-specific protein mediating the interaction between DNA and RNA polymerase. The chain is Probable transcriptional regulator ycf27 (ycf27) from Cyanophora paradoxa.